A 176-amino-acid polypeptide reads, in one-letter code: Myelin basic protein (176 aa).

The span at 1–11 shows a compositional bias: basic residues; the sequence is MASQKHSRGHG. The disordered stretch occupies residues 1–176; the sequence is MASQKHSRGH…SRSSSPMARR (176 aa). The residue at position 2 (alanine 2) is an N-acetylalanine. Phosphoserine is present on serine 7. 2 positions are modified to citrulline: arginine 25 and arginine 33. Serine 58 is modified (phosphoserine). The residue at position 97 (asparagine 97) is a Deamidated asparagine. The residue at position 103 (threonine 103) is a Phosphothreonine. Glutamine 108 is modified (deamidated glutamine). The residue at position 111 (arginine 111) is a Symmetric dimethylarginine. Serine 117 bears the Phosphoserine mark. A compositionally biased stretch (basic and acidic residues) spans 134–153; that stretch reads SLEHHKSSYKGYKDPHREGH. Over residues 166–176 the composition is skewed to polar residues; it reads RSRSSSPMARR. A phosphoserine mark is found at serine 167 and serine 171. Arginine 176 is subject to Citrulline.

It belongs to the myelin basic protein family. In terms of assembly, homodimer. As in other animals, several charge isomers may be produced as a result of optional post-translational modifications, such as phosphorylation of serine or threonine residues, deamidation of glutamine or asparagine residues, citrullination and methylation of arginine residues.

The protein resides in the myelin membrane. Is, with PLP, the most abundant protein component of the myelin membrane in the CNS. Plays a role in both the formation and stabilization of this compact multilayer arrangement of bilayers. Each splice variant and charge isomer may have a specialized function in the assembly of an optimized, biochemically functional myelin membrane. This chain is Myelin basic protein (mbp), found in Xenopus laevis (African clawed frog).